Reading from the N-terminus, the 117-residue chain is UPF0344 protein GK0697 (117 aa).

The next 4 membrane-spanning stretches (helical) occupy residues 1–21 (MTHA…LAVS), 39–59 (LFYI…ASIS), 60–80 (ALYW…EMVL), and 97–117 (VIAL…FDLF).

Belongs to the UPF0344 family.

The protein resides in the cell membrane. This Geobacillus kaustophilus (strain HTA426) protein is UPF0344 protein GK0697.